The chain runs to 2073 residues: Dedicator of cytokinesis protein 11 (2073 aa).

Ser12 carries the phosphoserine modification. Position 16 is a phosphothreonine (Thr16). A phosphoserine mark is found at Ser23 and Ser161. The PH domain maps to 165–272; it reads GVIKQGWLHK…WLIMLKKIIQ (108 aa). Tyr248 carries the post-translational modification Phosphotyrosine. Phosphoserine is present on residues Ser306 and Ser445. One can recognise a C2 DOCK-type domain in the interval 640–818; sequence KNHLYVYPLQ…PLLKIKTHLE (179 aa). The tract at residues 1227 to 1267 is disordered; it reads QNGHGIKREDSRGSLIPEGATGFPDPGSTSENTRQSSSRSS. 2 positions are modified to phosphoserine: Ser1237 and Ser1240. Low complexity predominate over residues 1254-1267; it reads STSENTRQSSSRSS. The DOCKER domain occupies 1609-2036; sequence KSYASTPELR…LSDIIHEQIL (428 aa).

This sequence belongs to the DOCK family. As to quaternary structure, interacts with CDC42. Expressed in spleen, thymus, mesenteric lymph nodes (MLN), bone marrow and peripheral blood lymphocytes. Enriched in B-cells from germinal centers. Expressed in B-, T- and dendritic cells as well as Purkinje cells.

Its function is as follows. Guanine nucleotide-exchange factor (GEF) that activates CDC42 by exchanging bound GDP for free GTP. Required for marginal zone (MZ) B-cell development, is associated with early bone marrow B-cell development, MZ B-cell formation, MZ B-cell number and marginal metallophilic macrophages morphology. Facilitates filopodia formation through the activation of CDC42. The sequence is that of Dedicator of cytokinesis protein 11 from Mus musculus (Mouse).